The chain runs to 390 residues: DNA polymerase IV (390 aa).

A UmuC domain is found at 6 to 187 (VMHVDLDAFF…LDIAVMPGIG (182 aa)). 2 residues coordinate Mg(2+): Asp10 and Asp105. The active site involves Glu106.

Belongs to the DNA polymerase type-Y family. As to quaternary structure, monomer. Mg(2+) is required as a cofactor.

The protein resides in the cytoplasm. The catalysed reaction is DNA(n) + a 2'-deoxyribonucleoside 5'-triphosphate = DNA(n+1) + diphosphate. Its function is as follows. Poorly processive, error-prone DNA polymerase involved in untargeted mutagenesis. Copies undamaged DNA at stalled replication forks, which arise in vivo from mismatched or misaligned primer ends. These misaligned primers can be extended by PolIV. Exhibits no 3'-5' exonuclease (proofreading) activity. May be involved in translesional synthesis, in conjunction with the beta clamp from PolIII. In Dehalococcoides mccartyi (strain CBDB1), this protein is DNA polymerase IV.